A 746-amino-acid polypeptide reads, in one-letter code: MAGSRGAGRTAAPSVRPEKRRSEPELEPEPEPEPPLLCTSPLSHSTGSDSGVSDSEESVFSGLEDSGSDSSEDDDEGDEEGEDGALDDEGHSGIKKTTEEQVQASTPCPRTEMASARIGDEYAEDSSDEEDIRNTVGNVPLEWYDDFPHVGYDLDGRRIYKPLRTRDELDQFLDKMDDPDYWRTVQDPMTGRDLRLTDEQVALVRRLQSGQFGDVGFNPYEPAVDFFSGDVMIHPVTNRPADKRSFIPSLVEKEKVSRMVHAIKMGWIQPRRPRDPTPSFYDLWAQEDPNAVLGRHKMHVPAPKLALPGHAESYNPPPEYLLSEEERLAWEQQEPGERKLSFLPRKFPSLRAVPAYGRFIQERFERCLDLYLCPRQRKMRVNVDPEDLIPKLPRPRDLQPFPTCQALVYRGHSDLVRCLSVSPGGQWLVSGSDDGSLRLWEVATARCVRTVPVGGVVKSVAWNPSPAVCLVAAAVEDSVLLLNPALGDRLVAGSTDQLLSAFVPPEEPPLQPARWLEASEEERQVGLRLRICHGKPVTQVTWHGRGDYLAVVLATQGHTQVLIHQLSRRRSQSPFRRSHGQVQRVAFHPARPFLLVASQRSVRLYHLLRQELTKKLMPNCKWVSSLAVHPAGDNVICGSYDSKLVWFDLDLSTKPYRMLRHHKKALRAVAFHPRYPLFASGSDDGSVIVCHGMVYNDLLQNPLLVPVKVLKGHVLTRDLGVLDVIFHPTQPWVFSSGADGTVRLFT.

Residues 1–116 (MAGSRGAGRT…PCPRTEMASA (116 aa)) form a disordered region. Residues 43–65 (SHSTGSDSGVSDSEESVFSGLED) show a composition bias toward low complexity. The segment covering 66–87 (SGSDSSEDDDEGDEEGEDGALD) has biased composition (acidic residues). Residues 88-99 (DEGHSGIKKTTE) show a composition bias toward basic and acidic residues. Residue T106 is modified to Phosphothreonine. A Phosphotyrosine modification is found at Y122. Residues S126 and S127 each carry the phosphoserine modification. The sufficient for nucleolar localization stretch occupies residues 265–427 (MGWIQPRRPR…CLSVSPGGQW (163 aa)). WD repeat units follow at residues 411–450 (GHSDLVRCLSVSPGGQWLVSGSDDGSLRLWEVATARCVRT), 452–492 (PVGG…RLVA), 532–576 (CHGK…SPFR), 577–615 (RSHGQVQRVAFHPARPFLLVASQRSVRLYHLLRQELTKK), 618–657 (PNCKWVSSLAVHPAGDNVICGSYDSKLVWFDLDLSTKPYR), 661–700 (HHKKALRAVAFHPRYPLFASGSDDGSVIVCHGMVYNDLLQ), and 716–746 (TRDLGVLDVIFHPTQPWVFSSGADGTVRLFT).

This sequence belongs to the WD repeat BOP1/ERB1 family. As to quaternary structure, component of the PeBoW complex, composed of BOP1, PES1 and WDR12. The complex is held together by BOP1, which interacts with PES1 via its N-terminal domain and with WDR12 via a high-affinity interaction between the seven-bladed beta-propeller domains of the 2 proteins. The NOP7 complex associates with the 66S pre-ribosome. The PeBoW complex associates with DDX27, BOP1 interacts directly with DDX27.

The protein resides in the nucleus. The protein localises to the nucleolus. It is found in the nucleoplasm. Component of the PeBoW complex, which is required for maturation of 28S and 5.8S ribosomal RNAs and formation of the 60S ribosome. This Homo sapiens (Human) protein is Ribosome biogenesis protein BOP1.